The chain runs to 54 residues: uncharacterized protein (54 aa).

This is an uncharacterized protein from Saccharolobus solfataricus (Sulfolobus solfataricus).